Consider the following 353-residue polypeptide: MARQRVGLLFGGKSGEHDVSIVSAAAIAKAFAQEDNPDKYELLPFYIDRNGIWHDPEISQQVLTAGKALPVETVDPASRWQFPPAAPSIDAWFPIVHGPNGEDGTLQGLLTLMEKPFVGSKVLGSAAGMDKLAMKMVFAQAGLAQVDYVGVLRSEVWSGPCVFPKVCDKIEAQLDYPMFVKPANLGSSVGISKVRTRDELEKALDLAAEYDRRLIVEAGVTAREVECAVLGNDQPKASVVGEIRFDSDFYDYETKYTDGKSSMHIPAEIPGAIAQQIQELAIKAFQALDCRGIARVDFFYVEATQTVLINEINTLPGFTALSMYPQLWQQSGVPFPQLVDRLVQFALEDVPQA.

An ATP-grasp domain is found at lysine 135 to glutamine 344. ATP is bound at residue glutamate 171–glutamate 226. Residues aspartate 297, glutamate 311, and asparagine 313 each coordinate Mg(2+).

This sequence belongs to the D-alanine--D-alanine ligase family. Requires Mg(2+) as cofactor. Mn(2+) serves as cofactor.

The protein localises to the cytoplasm. The enzyme catalyses 2 D-alanine + ATP = D-alanyl-D-alanine + ADP + phosphate + H(+). It functions in the pathway cell wall biogenesis; peptidoglycan biosynthesis. Cell wall formation. The protein is D-alanine--D-alanine ligase of Picosynechococcus sp. (strain ATCC 27264 / PCC 7002 / PR-6) (Agmenellum quadruplicatum).